A 318-amino-acid polypeptide reads, in one-letter code: NADH-ubiquinone oxidoreductase chain 1 (318 aa).

Helical transmembrane passes span 3 to 23 (FVNL…LTLL), 68 to 88 (LILF…MWIP), 102 to 122 (ILFM…SGWA), 146 to 166 (LAII…STLI), 171 to 191 (HIWL…STLA), 222 to 242 (LFFL…TILF), 253 to 273 (EMYT…FLWI), and 294 to 314 (LPLT…LASI).

This sequence belongs to the complex I subunit 1 family.

It is found in the mitochondrion inner membrane. It catalyses the reaction a ubiquinone + NADH + 5 H(+)(in) = a ubiquinol + NAD(+) + 4 H(+)(out). Core subunit of the mitochondrial membrane respiratory chain NADH dehydrogenase (Complex I) that is believed to belong to the minimal assembly required for catalysis. Complex I functions in the transfer of electrons from NADH to the respiratory chain. The immediate electron acceptor for the enzyme is believed to be ubiquinone. The sequence is that of NADH-ubiquinone oxidoreductase chain 1 (MT-ND1) from Nyctalus plancyi velutinus (Fine-haired noctule).